Reading from the N-terminus, the 623-residue chain is V-type proton ATPase catalytic subunit A (623 aa).

252–259 (GAFGCGKT) lines the ATP pocket.

It belongs to the ATPase alpha/beta chains family. In terms of assembly, V-ATPase is a heteromultimeric enzyme composed of a peripheral catalytic V1 complex (main components: subunits A, B, C, D, E, and F) attached to an integral membrane V0 proton pore complex (main component: the proteolipid protein).

The enzyme catalyses ATP + H2O + 4 H(+)(in) = ADP + phosphate + 5 H(+)(out). Catalytic subunit of the peripheral V1 complex of vacuolar ATPase. V-ATPase vacuolar ATPase is responsible for acidifying a variety of intracellular compartments in eukaryotic cells. The polypeptide is V-type proton ATPase catalytic subunit A (Brassica napus (Rape)).